A 243-amino-acid chain; its full sequence is UDP-2,3-diacylglucosamine hydrolase (243 aa).

Residues aspartate 8, histidine 10, aspartate 41, asparagine 79, and histidine 114 each contribute to the Mn(2+) site. 79-80 (NR) contacts substrate. Positions 122, 164, 167, and 195 each coordinate substrate. Histidine 195 and histidine 197 together coordinate Mn(2+).

This sequence belongs to the LpxH family. Mn(2+) serves as cofactor.

The protein localises to the cell inner membrane. It catalyses the reaction UDP-2-N,3-O-bis[(3R)-3-hydroxytetradecanoyl]-alpha-D-glucosamine + H2O = 2-N,3-O-bis[(3R)-3-hydroxytetradecanoyl]-alpha-D-glucosaminyl 1-phosphate + UMP + 2 H(+). It functions in the pathway glycolipid biosynthesis; lipid IV(A) biosynthesis; lipid IV(A) from (3R)-3-hydroxytetradecanoyl-[acyl-carrier-protein] and UDP-N-acetyl-alpha-D-glucosamine: step 4/6. In terms of biological role, hydrolyzes the pyrophosphate bond of UDP-2,3-diacylglucosamine to yield 2,3-diacylglucosamine 1-phosphate (lipid X) and UMP by catalyzing the attack of water at the alpha-P atom. Involved in the biosynthesis of lipid A, a phosphorylated glycolipid that anchors the lipopolysaccharide to the outer membrane of the cell. This is UDP-2,3-diacylglucosamine hydrolase from Vibrio vulnificus (strain YJ016).